The chain runs to 528 residues: Cytochrome P450 monooxygenase vrcB (528 aa).

Residues 5 to 27 traverse the membrane as a helical segment; the sequence is YGLFFAAVALYSVALVIYRLYLH. Heme is bound at residue C470.

This sequence belongs to the cytochrome P450 family. Heme is required as a cofactor.

It is found in the membrane. The enzyme catalyses variecoladiene + 4 reduced [NADPH--hemoprotein reductase] + 4 O2 = variecolin + 4 oxidized [NADPH--hemoprotein reductase] + 6 H2O + 4 H(+). Its pathway is secondary metabolite biosynthesis; terpenoid biosynthesis. In terms of biological role, cytochrome P450 monooxygenase; part of the gene cluster that mediates the biosynthesis of the sesterterpene variecolin. The first step in the pathway is performed by the variecoladiene synthase vrcA that possesses both prenyl transferase and terpene cyclase activity, converting isopentenyl diphosphate and dimethylallyl diphosphate into geranylfarnesyl pyrophosphate (GFPP) and then converting GFPP into the tetracyclic variecoladiene. The cytochrome P450 monooxygenase vrcB then catalyzes multiple oxidations at C-5 and C-20 positions to yield variecolin. The protein is Cytochrome P450 monooxygenase vrcB of Aspergillus aculeatus (strain ATCC 16872 / CBS 172.66 / WB 5094).